We begin with the raw amino-acid sequence, 171 residues long: NADH-quinone oxidoreductase subunit I 1 (171 aa).

4Fe-4S ferredoxin-type domains lie at 39–71 and 81–110; these read IVLTRDPDGQERCVACNLCAAVCPVGCIDLSKA and EHFRINFARCIFCGFCEEACPTAAIQLTPD. [4Fe-4S] cluster contacts are provided by C51, C54, C57, C61, C90, C93, C96, and C100.

Belongs to the complex I 23 kDa subunit family. In terms of assembly, NDH-1 is composed of 14 different subunits. Subunits NuoA, H, J, K, L, M, N constitute the membrane sector of the complex. The cofactor is [4Fe-4S] cluster.

Its subcellular location is the cell inner membrane. The catalysed reaction is a quinone + NADH + 5 H(+)(in) = a quinol + NAD(+) + 4 H(+)(out). Functionally, NDH-1 shuttles electrons from NADH, via FMN and iron-sulfur (Fe-S) centers, to quinones in the respiratory chain. The immediate electron acceptor for the enzyme in this species is believed to be ubiquinone. Couples the redox reaction to proton translocation (for every two electrons transferred, four hydrogen ions are translocated across the cytoplasmic membrane), and thus conserves the redox energy in a proton gradient. The protein is NADH-quinone oxidoreductase subunit I 1 of Rhodopseudomonas palustris (strain HaA2).